The following is a 181-amino-acid chain: Nucleoside triphosphate/diphosphate phosphatase (181 aa).

The active-site Proton donor is the Arg-26. The Mg(2+) site is built by Asn-90, Asp-106, Asp-108, Asp-110, Asp-123, and Glu-126.

It belongs to the Ntdp family. Requires Mg(2+) as cofactor.

The catalysed reaction is a ribonucleoside 5'-triphosphate + H2O = a ribonucleoside 5'-diphosphate + phosphate + H(+). The enzyme catalyses a ribonucleoside 5'-diphosphate + H2O = a ribonucleoside 5'-phosphate + phosphate + H(+). Has nucleoside phosphatase activity towards nucleoside triphosphates and nucleoside diphosphates. The chain is Nucleoside triphosphate/diphosphate phosphatase from Staphylococcus carnosus (strain TM300).